Here is a 257-residue protein sequence, read N- to C-terminus: MSLPNPFLIRPAPKKGKKGAPLVLLHDGGGTIFSYLQLGALGRDVYGIHNTRPGPTGVWEGGIAQMAAEYLDLIKTVVPSGPIIIGGWSLGGLVSFEMARQMAASAGSSSSSEQLQVLGLIMIDSRHPSTFTDKELVLPDSIKPAIRESIQHNMTQSRQLIRDYSTPSWPQGSQPPPTMFLRATRDLDGVPLPIQADAASSTRNGRMEGWREYEHDFIREVVEVEGTHFSIFEDQNIGELDKKLLAACKTLDRGVKS.

This sequence belongs to the AMT4 thioesterase family.

The protein operates within antifungal biosynthesis. In terms of biological role, thioesterase; part of the gene cluster that mediates the biosynthesis of the antifungal antibiotic FR901469, an inhibitor of beta-1,3-glucansynthase, exerting antifungal activity against the pathogenes Candida albicans and Aspergillus fumigatus. FR901469 is a cyclic depsipeptide containing 12 amino acid residues and a fatty acid chain. The NRPS frbI contains 12 modules responsible for the formation of the depsipeptide backbone which is denoted as Acyl-Thr-Ala-Tyr-Val-4OHPro-Thr-Thr-3OHPro-threo3OHGln-Gly-Thr-Orn-OH (C71H116N14O23). The PKS frbB is probably involved in the production of the hydrocarbon chain, and the acyl-CoA ligase frbC might be involved in the transport of the chain to the peptide ptoduct of frbI. Because FR901469 contains 3 hydroxylated amino acid residues, the 3 oxygenases frbA, frbH, and frbJ might be participating in amino acid hydroxylation. As no thioesterase domains were detected in frbI or frbB, the thioesterases frbD and frbE may instead release and cyclize the products of the NRPS and PKS, respectively. In Dothideomycetidae sp. (strain 11243) (Fungal sp. (strain No.11243)), this protein is Thioesterase frbE.